The chain runs to 511 residues: V-type proton ATPase subunit B, brain isoform (511 aa).

Arg400 provides a ligand contact to ATP.

It belongs to the ATPase alpha/beta chains family. V-ATPase is a heteromultimeric enzyme made up of two complexes: the ATP-hydrolytic V1 complex and the proton translocation V0 complex. The V1 complex consists of three catalytic AB heterodimers that form a heterohexamer, three peripheral stalks each consisting of EG heterodimers, one central rotor including subunits D and F, and the regulatory subunits C and H. The proton translocation complex V0 consists of the proton transport subunit a, a ring of proteolipid subunits c9c'', rotary subunit d, subunits e and f, and the accessory subunits ATP6AP1/Ac45 and ATP6AP2/PRR. Expressed in brain (at protein level). Expressed in all tissues tested, but highest in brain and in adrenal medulla.

It localises to the apical cell membrane. It is found in the melanosome. The protein resides in the cytoplasm. The protein localises to the cytoplasmic vesicle. Its subcellular location is the clathrin-coated vesicle membrane. It localises to the secretory vesicle. It is found in the synaptic vesicle membrane. In terms of biological role, non-catalytic subunit of the V1 complex of vacuolar(H+)-ATPase (V-ATPase), a multisubunit enzyme composed of a peripheral complex (V1) that hydrolyzes ATP and a membrane integral complex (V0) that translocates protons. V-ATPase is responsible for acidifying and maintaining the pH of intracellular compartments and in some cell types, is targeted to the plasma membrane, where it is responsible for acidifying the extracellular environment. In renal intercalated cells, can partially compensate the lack of ATP6V1B1 and mediate secretion of protons (H+) into the urine under base-line conditions but not in conditions of acid load. The protein is V-type proton ATPase subunit B, brain isoform (ATP6V1B2) of Bos taurus (Bovine).